The chain runs to 675 residues: Methionine--tRNA ligase (675 aa).

A 'HIGH' region motif is present at residues P15–H25. 4 residues coordinate Zn(2+): C146, C149, C159, and C162. Positions K332–S336 match the 'KMSKS' region motif. K335 is a binding site for ATP. The 103-residue stretch at D573 to K675 folds into the tRNA-binding domain.

This sequence belongs to the class-I aminoacyl-tRNA synthetase family. MetG type 1 subfamily. Homodimer. Zn(2+) serves as cofactor.

It localises to the cytoplasm. It catalyses the reaction tRNA(Met) + L-methionine + ATP = L-methionyl-tRNA(Met) + AMP + diphosphate. Is required not only for elongation of protein synthesis but also for the initiation of all mRNA translation through initiator tRNA(fMet) aminoacylation. This chain is Methionine--tRNA ligase, found in Yersinia pseudotuberculosis serotype O:3 (strain YPIII).